A 117-amino-acid polypeptide reads, in one-letter code: DNA-directed RNA polymerase II subunit RPB11 (117 aa).

At Met-1 the chain carries N-acetylmethionine.

Belongs to the archaeal Rpo11/eukaryotic RPB11/RPC19 RNA polymerase subunit family. Component of the RNA polymerase II (Pol II) core complex consisting of 12 subunits: a ten-subunit catalytic core composed of POLR2A/RPB1, POLR2B/RPB2, POLR2C/RPB3, POLR2I/RPB9, POLR2J/RPB11, POLR2E/RPABC1, POLR2F/RPABC2, POLR2H/RPABC3, POLR2K/RPABC4 and POLR2L/RPABC5 and a mobile stalk composed of two subunits POLR2D/RPB4 and POLR2G/RPB7, protruding from the core and functioning primarily in transcription initiation. Part of Pol II(G) complex, in which Pol II core associates with an additional subunit POLR2M; unlike conventional Pol II, Pol II(G) functions as a transcriptional repressor. Part of TBP-based Pol II pre-initiation complex (PIC), in which Pol II core assembles with general transcription factors and other specific initiation factors including GTF2E1, GTF2E2, GTF2F1, GTF2F2, TCEA1, ERCC2, ERCC3, GTF2H2, GTF2H3, GTF2H4, GTF2H5, GTF2A1, GTF2A2, GTF2B and TBP; this large multi-subunit PIC complex mediates DNA unwinding and targets Pol II core to the transcription start site where the first phosphodiester bond forms. Interacts with PTPN6; this interaction promotes the recruitment of RNA pol II to the PCK1 promoter.

It localises to the nucleus. DNA-dependent RNA polymerase catalyzes the transcription of DNA into RNA using the four ribonucleoside triphosphates as substrates. Component of RNA polymerase II which synthesizes mRNA precursors and many functional non-coding RNAs. Pol II is the central component of the basal RNA polymerase II transcription machinery. It is composed of mobile elements that move relative to each other. POLR2J/RPB11 is part of the core element with the central large cleft. This Bos taurus (Bovine) protein is DNA-directed RNA polymerase II subunit RPB11 (POLR2J).